Consider the following 84-residue polypeptide: Large ribosomal subunit protein bL27 (84 aa).

The tract at residues 1–25 (MAHKKAGGSSRNGRDSNGQRRGVKR) is disordered.

The protein belongs to the bacterial ribosomal protein bL27 family.

This chain is Large ribosomal subunit protein bL27, found in Desulfatibacillum aliphaticivorans.